The sequence spans 70 residues: DNA gyrase inhibitor YacG (70 aa).

The Zn(2+) site is built by Cys-9, Cys-12, Cys-28, and Cys-32. A disordered region spans residues 43-70 (ESRKIPGSSIDPESIVTSNNKQDNEDEQ).

This sequence belongs to the DNA gyrase inhibitor YacG family. Interacts with GyrB. Requires Zn(2+) as cofactor.

In terms of biological role, inhibits all the catalytic activities of DNA gyrase by preventing its interaction with DNA. Acts by binding directly to the C-terminal domain of GyrB, which probably disrupts DNA binding by the gyrase. This is DNA gyrase inhibitor YacG from Legionella pneumophila (strain Paris).